Consider the following 1859-residue polypeptide: MSSLASQLKSISDKSASIALNRQQRSKIHSRSLIFDPKVAASQDYDEIYDVAIDALDELCELDSRFNKFKNSLFANDSINFDRNVQSEDVVTQLDQNINAFFTLLGPYYNFTAALRASEWLVRRFQANMHNLEYMILTALPYYMQPVFIKILNVIPKQNIPQIFEWLVTAKDQLRSPTLQVCFRAFFNDNHLFTFYSSFLDEQIKRNTTYKEQLVFYLSITIQLLPASNKNTLNETLIPVVLRSSDLMLTSKNSSLRLGAYSVLAVLSAVAPLSIELLNTLTFAVLANDIALEAQFAKQTVFLLIQLWTSTTELTTSEALSKTPSLPINIIEHIDISQAKKDKFLAIYFSSIFPSETSLQLLNMIELKGNKRMFKFVVHTVLSSLKPQHLNGGVTSNNNSTNYKDTILDIVRKLIKLDQATFDEMLKSFRLTVSELELTLEGSLLATHSGDEKLDEFGDNVDRDDDTEYTKFVDERQDDKEDGDENTKFDISKLGASAPTYLDSKYNPEFYKLSFAFTRFCSKVDIKSQRAAILHFTHKVFQNPALSITFFVKSGIIFGCSIYMVKNTADGKTDFYLVLPLLLIAFNDPSSHIRAAFAQLVQLVSEITKAIHENKKKQKTLLFFESEVYANSAEKKMISPQDAIKLFAFIGSLDGMRLEEGKIATLLKSIFNGKFDKKTLGSLYQTFILNQWAQPSLPIVIKQRVWSISSQLNEMGVNGVRTYFWDTDIKPYLAKREEWLVQAKEAKLADYYNIVEKSLVQLVGGDHLSAEDSNSVSHWLCQALDSNTSLQLVANERITSIFPKLTSVESKVIILSKLVDLLVSDDYVEFDPMITLQSLPLDSAVFLQILENVKIGDQMPEQGVVKRRRRSSSSTKQAMAKSDMTNLASQHLRKLSIILEVLEVNLRKASIANPKLLKVLFKILSDLDYLGNDGNLPILYAQEVLASCLLLSISELKNSNHKHQLDSNSVRADLIVNSLRNSSSPQVQNRLLLVISELATLAPEIILHSVMPIFTFMGAHTIRQDDEFSNDALQKTVARVIPALASTNSGSFTTEIEFLLASFTAAFKHIPSHRRVRLFVALTKTLKPSNSMHILIYLLGEQYYQAKMQKNALEMRDIETFVTAYLKAFAVETQLNGLDQFSNLLNELPRHQLEENSKIYDQLRSRPIFGLAVVNSTTEELLKKRHALLEYLNSVLELDSANFDVTSLKSRIDIALKESSENDTLVLPQIRHMTSFALSELDIYTNTEPHPEISAELFVMLTSLVDLLPVVKFVESITEFLDVDKLGDNTAIKVGRNYAVLAARKFENEISLTLESVVENFSDLDKLFIVLLKGIERNVDLELQQAYLNLFAVITSKLGVDAGLTAKFSSVLIKSLGVITTSSGLLSSESEIVIASISAIVSIVNVLGIKTLGLFPKIIPPTLKIWEQTTTTTTATTTRSISATKIGRDEQNESSKLVQESVLLLLSCYIKKMPSFMVTTLDSVILTILNSDLTESQIKSSIMNLIIDRVNIGQVFKSLCSVWTQRQFYQSKNPASLGLYLNSMESTINKLEKREAISEATVFMKWLIQAFEFRDYSEKLGPPIRYQHYSSYGKFFPFVCYCLCHETQRMESSFHSCAIAYVMKLNDKSFRPLFANLVRWAIDGDNSIHDVAKTSRLLSFYRFFNKLQELLKSIVTSYYSYLVDATSECLKSFASEEDKGNKDATTLRRIVLISLSLSFTFDQDEYWSQQGRFDSICQPLLDQLSNIEESIGKFLVKTITNFVSDISSKEHSEVVLKGLVKFISYDTENLSNTKIWTIRTLKSIFQKMGEQWLSYLPILVPHIAELLEDDDEAVEIEVREGLVRVIEKVLGEPLDRYLS.

Residues 258 to 278 form a helical membrane-spanning segment; sequence LGAYSVLAVLSAVAPLSIELL. An HEAT 1 repeat occupies 578 to 616; that stretch reads VLPLLLIAFNDPSSHIRAAFAQLVQLVSEITKAIHENKK. A helical transmembrane segment spans residues 1392–1412; that stretch reads IVIASISAIVSIVNVLGIKTL. The HEAT 2 repeat unit spans residues 1819 to 1857; sequence LVPHIAELLEDDDEAVEIEVREGLVRVIEKVLGEPLDRY.

Belongs to the HEATR1/UTP10 family. Component of the ribosomal small subunit (SSU) processome.

It localises to the nucleus. Its subcellular location is the nucleolus. The protein resides in the membrane. Its function is as follows. Involved in nucleolar processing of pre-18S ribosomal RNA. Involved in ribosome biosynthesis. In Lodderomyces elongisporus (strain ATCC 11503 / CBS 2605 / JCM 1781 / NBRC 1676 / NRRL YB-4239) (Yeast), this protein is U3 small nucleolar RNA-associated protein 10.